The chain runs to 128 residues: MQRNMLKSKIHRVAVTHCELHYEGSCAIDEDLLEAANIVENERIDIWNINNGERFSTYAIKGERGSGMISLNGSAARRAQLGDLVIIAAFAVVDEAELKAGWKPDLVFVDDNNRIKGSRDHVPTQNWT.

Residue Ser-25 is the Schiff-base intermediate with substrate; via pyruvic acid of the active site. Pyruvic acid (Ser) is present on Ser-25. Residue Thr-57 participates in substrate binding. Tyr-58 (proton donor) is an active-site residue. 73–75 (GSA) contacts substrate.

This sequence belongs to the PanD family. In terms of assembly, heterooctamer of four alpha and four beta subunits. The cofactor is pyruvate. Is synthesized initially as an inactive proenzyme, which is activated by self-cleavage at a specific serine bond to produce a beta-subunit with a hydroxyl group at its C-terminus and an alpha-subunit with a pyruvoyl group at its N-terminus.

The protein resides in the cytoplasm. It carries out the reaction L-aspartate + H(+) = beta-alanine + CO2. It participates in cofactor biosynthesis; (R)-pantothenate biosynthesis; beta-alanine from L-aspartate: step 1/1. Its function is as follows. Catalyzes the pyruvoyl-dependent decarboxylation of aspartate to produce beta-alanine. This chain is Aspartate 1-decarboxylase, found in Paraburkholderia xenovorans (strain LB400).